A 147-amino-acid polypeptide reads, in one-letter code: Phosphoribosyl-AMP cyclohydrolase (147 aa).

A Mg(2+)-binding site is contributed by aspartate 91. Cysteine 92 provides a ligand contact to Zn(2+). Aspartate 93 and aspartate 95 together coordinate Mg(2+). Zn(2+) is bound by residues cysteine 108 and cysteine 115.

Belongs to the PRA-CH family. Homodimer. It depends on Mg(2+) as a cofactor. Requires Zn(2+) as cofactor.

Its subcellular location is the cytoplasm. It catalyses the reaction 1-(5-phospho-beta-D-ribosyl)-5'-AMP + H2O = 1-(5-phospho-beta-D-ribosyl)-5-[(5-phospho-beta-D-ribosylamino)methylideneamino]imidazole-4-carboxamide. It participates in amino-acid biosynthesis; L-histidine biosynthesis; L-histidine from 5-phospho-alpha-D-ribose 1-diphosphate: step 3/9. In terms of biological role, catalyzes the hydrolysis of the adenine ring of phosphoribosyl-AMP. The chain is Phosphoribosyl-AMP cyclohydrolase from Rhodopseudomonas palustris (strain BisB5).